A 339-amino-acid polypeptide reads, in one-letter code: Cilia- and flagella-associated protein 36 (339 aa).

Coiled coils occupy residues 142-188 (ISDL…ENKQ) and 255-330 (NLSQ…EVIL). 2 disordered regions span residues 177-212 (NLTL…EKQP) and 281-318 (KKQE…QRRK). Residues 187-200 (KQSSGSERTPNNTE) are compositionally biased toward polar residues. The span at 281-313 (KKQESKKMAQNSEEHEEKATCSKQEMTEEEKKS) shows a compositional bias: basic and acidic residues.

It belongs to the CFAP36 family.

Its subcellular location is the nucleus. The protein resides in the cytoplasm. The protein localises to the cell projection. It localises to the cilium. It is found in the flagellum. This chain is Cilia- and flagella-associated protein 36, found in Xenopus tropicalis (Western clawed frog).